Consider the following 426-residue polypeptide: Serine--tRNA ligase (426 aa).

A compositionally biased stretch (basic and acidic residues) spans 1–15 (MIDVKDLSENPDKFR). The segment at 1-22 (MIDVKDLSENPDKFRASQRARG) is disordered. An L-serine-binding site is contributed by 228–230 (TSE). ATP-binding positions include 259–261 (RRE) and Val275. Glu282 lines the L-serine pocket. 346–349 (ELTS) is a binding site for ATP. Thr386 is an L-serine binding site.

This sequence belongs to the class-II aminoacyl-tRNA synthetase family. Type-1 seryl-tRNA synthetase subfamily. In terms of assembly, homodimer. The tRNA molecule binds across the dimer.

The protein resides in the cytoplasm. It carries out the reaction tRNA(Ser) + L-serine + ATP = L-seryl-tRNA(Ser) + AMP + diphosphate + H(+). It catalyses the reaction tRNA(Sec) + L-serine + ATP = L-seryl-tRNA(Sec) + AMP + diphosphate + H(+). It participates in aminoacyl-tRNA biosynthesis; selenocysteinyl-tRNA(Sec) biosynthesis; L-seryl-tRNA(Sec) from L-serine and tRNA(Sec): step 1/1. Catalyzes the attachment of serine to tRNA(Ser). Is also able to aminoacylate tRNA(Sec) with serine, to form the misacylated tRNA L-seryl-tRNA(Sec), which will be further converted into selenocysteinyl-tRNA(Sec). This chain is Serine--tRNA ligase, found in Pseudarthrobacter chlorophenolicus (strain ATCC 700700 / DSM 12829 / CIP 107037 / JCM 12360 / KCTC 9906 / NCIMB 13794 / A6) (Arthrobacter chlorophenolicus).